The primary structure comprises 308 residues: uncharacterized protein (308 aa).

The S4 RNA-binding domain maps to 15-81 (MRVDTGLARL…QNTPIDIEGM (67 aa)). Residue aspartate 139 is part of the active site.

The protein belongs to the pseudouridine synthase RluA family.

The catalysed reaction is a uridine in RNA = a pseudouridine in RNA. This is an uncharacterized protein from Mycobacterium tuberculosis (strain CDC 1551 / Oshkosh).